Consider the following 253-residue polypeptide: RAD51-associated protein 1 (253 aa).

An interaction with DNA region spans residues A32 to K51. Disordered stretches follow at residues P33–D74, D141–D169, and K184–P244. The span at P154–D169 shows a compositional bias: acidic residues. The segment covering K184–K195 has biased composition (basic residues). The tract at residues T190–W241 is interaction with DNA. Polar residues predominate over residues S199 to E222.

Monomer.

The protein localises to the chromosome. Its subcellular location is the nucleus. Functionally, structure-specific DNA-binding protein involved in DNA repair by promoting RAD51-mediated homologous recombination. Acts by stimulating D-Loop formation by RAD51: specifically enhances joint molecule formation through its structure-specific DNA interaction and its interaction with RAD51. Binds single-stranded DNA (ssDNA), double-stranded DNA (dsDNA) and secondary DNA structures, such as D-loop structures: has a strong preference for branched-DNA structures that are obligatory intermediates during joint molecule formation. Involved in mitotic recombination-dependent replication fork processing. Also involved in meiosis by promoting DMC1-mediated homologous meiotic recombination. The sequence is that of RAD51-associated protein 1 from Gallus gallus (Chicken).